The sequence spans 84 residues: Exodeoxyribonuclease 7 small subunit (84 aa).

Belongs to the XseB family. As to quaternary structure, heterooligomer composed of large and small subunits.

It is found in the cytoplasm. It carries out the reaction Exonucleolytic cleavage in either 5'- to 3'- or 3'- to 5'-direction to yield nucleoside 5'-phosphates.. Bidirectionally degrades single-stranded DNA into large acid-insoluble oligonucleotides, which are then degraded further into small acid-soluble oligonucleotides. The sequence is that of Exodeoxyribonuclease 7 small subunit from Yersinia enterocolitica serotype O:8 / biotype 1B (strain NCTC 13174 / 8081).